The sequence spans 276 residues: Probable endonuclease 4 (276 aa).

H66, H106, E141, D175, H178, H210, D223, H225, and E255 together coordinate Zn(2+).

This sequence belongs to the AP endonuclease 2 family. It depends on Zn(2+) as a cofactor.

The catalysed reaction is Endonucleolytic cleavage to 5'-phosphooligonucleotide end-products.. Endonuclease IV plays a role in DNA repair. It cleaves phosphodiester bonds at apurinic or apyrimidinic (AP) sites, generating a 3'-hydroxyl group and a 5'-terminal sugar phosphate. The protein is Probable endonuclease 4 of Heliobacterium modesticaldum (strain ATCC 51547 / Ice1).